We begin with the raw amino-acid sequence, 631 residues long: Phosphomethylpyrimidine synthase (631 aa).

Substrate-binding positions include asparagine 239, methionine 268, tyrosine 297, histidine 333, 353–355 (SRG), 394–397 (DGLR), and glutamate 433. Histidine 437 is a binding site for Zn(2+). Substrate is bound at residue tyrosine 460. Histidine 501 contacts Zn(2+). [4Fe-4S] cluster is bound by residues cysteine 581, cysteine 584, and cysteine 589.

Belongs to the ThiC family. In terms of assembly, homodimer. Requires [4Fe-4S] cluster as cofactor.

The enzyme catalyses 5-amino-1-(5-phospho-beta-D-ribosyl)imidazole + S-adenosyl-L-methionine = 4-amino-2-methyl-5-(phosphooxymethyl)pyrimidine + CO + 5'-deoxyadenosine + formate + L-methionine + 3 H(+). It participates in cofactor biosynthesis; thiamine diphosphate biosynthesis. In terms of biological role, catalyzes the synthesis of the hydroxymethylpyrimidine phosphate (HMP-P) moiety of thiamine from aminoimidazole ribotide (AIR) in a radical S-adenosyl-L-methionine (SAM)-dependent reaction. This chain is Phosphomethylpyrimidine synthase, found in Escherichia coli O157:H7.